The sequence spans 271 residues: Cytosolic Fe-S cluster assembly factor NUBP2 (271 aa).

Met-1 bears the N-acetylmethionine mark. 22–29 is an ATP binding site; it reads GKGGVGKS. Residues Cys-196 and Cys-199 each coordinate [4Fe-4S] cluster.

It belongs to the Mrp/NBP35 ATP-binding proteins family. NUBP2/CFD1 subfamily. Heterotetramer of 2 NUBP1 and 2 NUBP2 chains. Interacts with KIFC1. Interacts with NUBP1. The cofactor is [4Fe-4S] cluster.

Its subcellular location is the nucleus. It is found in the cytoplasm. It localises to the cytoskeleton. The protein localises to the microtubule organizing center. The protein resides in the centrosome. Its subcellular location is the cilium axoneme. It is found in the centriole. Component of the cytosolic iron-sulfur (Fe/S) protein assembly (CIA) machinery. Required for maturation of extramitochondrial Fe-S proteins. The NUBP1-NUBP2 heterotetramer forms a Fe-S scaffold complex, mediating the de novo assembly of an Fe-S cluster and its transfer to target apoproteins. Negatively regulates cilium formation and structure. The protein is Cytosolic Fe-S cluster assembly factor NUBP2 of Bos taurus (Bovine).